Here is a 194-residue protein sequence, read N- to C-terminus: Peptidyl-tRNA hydrolase (194 aa).

Y17 serves as a coordination point for tRNA. H22 (proton acceptor) is an active-site residue. TRNA-binding residues include F68, N70, and N116.

Belongs to the PTH family. As to quaternary structure, monomer.

Its subcellular location is the cytoplasm. It carries out the reaction an N-acyl-L-alpha-aminoacyl-tRNA + H2O = an N-acyl-L-amino acid + a tRNA + H(+). In terms of biological role, hydrolyzes ribosome-free peptidyl-tRNAs (with 1 or more amino acids incorporated), which drop off the ribosome during protein synthesis, or as a result of ribosome stalling. Catalyzes the release of premature peptidyl moieties from peptidyl-tRNA molecules trapped in stalled 50S ribosomal subunits, and thus maintains levels of free tRNAs and 50S ribosomes. This Shewanella woodyi (strain ATCC 51908 / MS32) protein is Peptidyl-tRNA hydrolase.